A 437-amino-acid polypeptide reads, in one-letter code: Doublesex- and mab-3-related transcription factor A2 (437 aa).

Positions 49–96 (CARCRNHGVVSALKGHKRYCRWKDCMCAKCTLIAERQRVMAAQVALRR) form a DNA-binding region, DM. The disordered stretch occupies residues 160–253 (IPRSMTPQLP…DPSSSSLARQ (94 aa)). Low complexity-rich tracts occupy residues 179–201 (SEPVSGSAPGASSPEAQPGSGSE) and 223–235 (SPSLISPLSSESG). In terms of domain architecture, DMA spans 254-289 (RTPINILTRVFPAQKRSVLELVLQGCGGDVVQAIEQ).

It belongs to the DMRT family.

It localises to the nucleus. In terms of biological role, may be involved in sexual development. This is Doublesex- and mab-3-related transcription factor A2 (dmrta2) from Xenopus laevis (African clawed frog).